The following is a 478-amino-acid chain: UBP1-associated protein 2A (478 aa).

The tract at residues 1 to 99 (MTKKRKLEGE…NQEDDDDEPI (99 aa)) is disordered. The span at 41–75 (GDVEEVEYEEVEEEQEEEVEDDDDEDDGDENEDQT) shows a compositional bias: acidic residues. RRM domains follow at residues 140–217 (RKIF…LASK) and 245–328 (KKIY…KPGK). Disordered stretches follow at residues 321–359 (IDGP…GGHG) and 442–478 (GTQP…YMGH). Residues 442 to 456 (GTQPGLQGGYQTPQP) show a composition bias toward low complexity. Gly residues predominate over residues 457 to 470 (GQGGTSRGQHGVGP).

Interacts with UBA1A, UBA2A, UBP1A, UBP1B, UBP1C and SRK2E. Expressed in young leaves, flowers and embryos.

The protein localises to the nucleus. Its function is as follows. Heterogeneous nuclear ribonucleoprotein (hnRNP)-like protein that acts as a component of a complex regulating the turnover of mRNAs in the nucleus. Binds with high affinity to RNA molecules that contain U-rich sequences in 3'-UTRs. May function in complex with UBP1 and contribute to the stabilization of mRNAs in the nucleus. However, unlike UBP1, UBA2A does not stimulate pre-mRNA splicing. The protein is UBP1-associated protein 2A (UBA2A) of Arabidopsis thaliana (Mouse-ear cress).